Consider the following 370-residue polypeptide: GTPase Obg (370 aa).

The Obg domain maps to 1–159 (MKFIDEARIE…RMLKLELKVL (159 aa)). Residues 128 to 147 (LHFKSSTNRAPRQKTDGKPG) are disordered. The 175-residue stretch at 160–334 (ADVGLLGMPN…LCYAIYDYLS (175 aa)) folds into the OBG-type G domain. GTP-binding positions include 166–173 (GMPNAGKS), 191–195 (FTTLA), 213–216 (DIPG), 284–287 (NKLD), and 315–317 (SAL). Mg(2+) is bound by residues serine 173 and threonine 193.

Belongs to the TRAFAC class OBG-HflX-like GTPase superfamily. OBG GTPase family. As to quaternary structure, monomer. It depends on Mg(2+) as a cofactor.

The protein localises to the cytoplasm. In terms of biological role, an essential GTPase which binds GTP, GDP and possibly (p)ppGpp with moderate affinity, with high nucleotide exchange rates and a fairly low GTP hydrolysis rate. Plays a role in control of the cell cycle, stress response, ribosome biogenesis and in those bacteria that undergo differentiation, in morphogenesis control. The chain is GTPase Obg from Burkholderia orbicola (strain MC0-3).